The primary structure comprises 170 residues: Shikimate kinase (170 aa).

11–16 (LSGKST) is a binding site for ATP. A Mg(2+)-binding site is contributed by Ser-15. Substrate is bound by residues Asp-33, Arg-57, and Gly-79. Residue Arg-119 coordinates ATP. Arg-137 lines the substrate pocket.

The protein belongs to the shikimate kinase family. Monomer. Requires Mg(2+) as cofactor.

It localises to the cytoplasm. It catalyses the reaction shikimate + ATP = 3-phosphoshikimate + ADP + H(+). It functions in the pathway metabolic intermediate biosynthesis; chorismate biosynthesis; chorismate from D-erythrose 4-phosphate and phosphoenolpyruvate: step 5/7. Functionally, catalyzes the specific phosphorylation of the 3-hydroxyl group of shikimic acid using ATP as a cosubstrate. In Clostridium botulinum (strain Langeland / NCTC 10281 / Type F), this protein is Shikimate kinase.